Here is a 770-residue protein sequence, read N- to C-terminus: Protein PAT1 homolog 1 (770 aa).

The interval 1-42 (MFRYESLEDCPLDEDEDAFQGLGEEDEEIDQFNDDTFGSGAV) is disordered. The segment at 1 to 84 (MFRYESLEDC…EMDLLGDHEE (84 aa)) is region A; interaction with DDX6/RCK. Residues 1–397 (MFRYESLEDC…HQSSHQDHLR (397 aa)) form an involved in nuclear foci localization region. Acidic residues predominate over residues 7-33 (LEDCPLDEDEDAFQGLGEEDEEIDQFN). A region N; interaction with decapping machinery region spans residues 85–388 (NLAERLSKMV…LNGTGDRGGH (304 aa)). Residues 86-95 (LAERLSKMVI) carry the Nuclear export signal motif. The tract at residues 155 to 195 (PQRPLQGPEDDRDLSERALPRRSTSPIIGSPPVRAVPIGTP) is disordered. Ser-177 is subject to Phosphoserine. At Thr-178 the chain carries Phosphothreonine. A phosphoserine mark is found at Ser-179 and Ser-184. Residue Thr-194 is modified to Phosphothreonine. An asymmetric dimethylarginine mark is found at Arg-217, Arg-223, and Arg-263. The interval 223-397 (RYPAPYGERI…HQSSHQDHLR (175 aa)) is involved in RNA-binding. Phosphoserine is present on Ser-278. At Arg-284 the chain carries Asymmetric dimethylarginine. Disordered regions lie at residues 319–340 (FSAP…GPHL) and 376–396 (HRNL…QDHL). Positions 321-337 (APPPATPPPQQHPPGPG) are enriched in pro residues. Arg-385 is modified (omega-N-methylarginine). Over residues 385 to 396 (RGGHQSSHQDHL) the composition is skewed to basic and acidic residues. The interval 389 to 448 (QSSHQDHLRKDPYANLMLQREKDWVSKIQMMQLQSTDPYLDDFYYQNYFEKLEKLSAAEE) is region H. The involved in nuclear speckle localization stretch occupies residues 398–770 (KDPYANLMLQ…TKLQLVQGIR (373 aa)). The region C stretch occupies residues 449 to 770 (IQGDGPKKER…TKLQLVQGIR (322 aa)).

This sequence belongs to the PAT1 family. As to quaternary structure, interacts (via region A) with DDX6/RCK. Interacts (via region H and region C) with LSM1 and LSM4. Interacts (via region N) with DCP1A, DCP2, EDC3, EDC4 and XRN1. Interacts with the CCR4-NOT complex. Interacts with the Lsm-containing SMN-Sm protein complex. Interacts with EIF4ENIF1/4E-T.

Its subcellular location is the cytoplasm. It localises to the P-body. It is found in the nucleus. The protein localises to the PML body. The protein resides in the nucleus speckle. Its function is as follows. RNA-binding protein involved in deadenylation-dependent decapping of mRNAs, leading to the degradation of mRNAs. Acts as a scaffold protein that connects deadenylation and decapping machinery. Required for cytoplasmic mRNA processing body (P-body) assembly. The chain is Protein PAT1 homolog 1 (Patl1) from Mus musculus (Mouse).